The following is a 34-amino-acid chain: Photosystem II reaction center protein M (34 aa).

The helical transmembrane segment at 5–25 (ILAFIATALFILVPTAFLLII) threads the bilayer.

The protein belongs to the PsbM family. As to quaternary structure, PSII is composed of 1 copy each of membrane proteins PsbA, PsbB, PsbC, PsbD, PsbE, PsbF, PsbH, PsbI, PsbJ, PsbK, PsbL, PsbM, PsbT, PsbX, PsbY, PsbZ, Psb30/Ycf12, at least 3 peripheral proteins of the oxygen-evolving complex and a large number of cofactors. It forms dimeric complexes.

It is found in the plastid. The protein localises to the chloroplast thylakoid membrane. In terms of biological role, one of the components of the core complex of photosystem II (PSII). PSII is a light-driven water:plastoquinone oxidoreductase that uses light energy to abstract electrons from H(2)O, generating O(2) and a proton gradient subsequently used for ATP formation. It consists of a core antenna complex that captures photons, and an electron transfer chain that converts photonic excitation into a charge separation. This subunit is found at the monomer-monomer interface. This is Photosystem II reaction center protein M from Buxus microphylla (Littleleaf boxwood).